The chain runs to 268 residues: MDKLFKTSFRFIIRFLQILSLPVVFPYFLLSFLACLITSKNYESLPYNYPPEIRFKKVYRLVSMWLYIKGIKVVTVNDKIIPKKPVLVVANHKSNLDPLVLIKAFGRLKNSPPLTFVAKIELKDTVLFKLMKLIDCVFIDRKNIRQIANALETQQQLIRQGTAIAVFAEGTRILSNDIGEFKPGALKVAYNAFVPILPVSIVGSLGKMESNKRLKEHGVKKSSNYEVKVIFNKLINPISFNQIDSNNLANNIRSIISDAYTSEKPSND.

An HXXXXD motif motif is present at residues 92–97 (HKSNLD).

This sequence belongs to the 1-acyl-sn-glycerol-3-phosphate acyltransferase family.

The enzyme catalyses a 1-acyl-sn-glycero-3-phosphate + an acyl-CoA = a 1,2-diacyl-sn-glycero-3-phosphate + CoA. Its pathway is phospholipid metabolism; CDP-diacylglycerol biosynthesis; CDP-diacylglycerol from sn-glycerol 3-phosphate: step 2/3. Converts lysophosphatidic acid (LPA) into phosphatidic acid by incorporating acyl moiety at the 2 position. This chain is Probable 1-acyl-sn-glycerol-3-phosphate acyltransferase (plsC), found in Mycoplasma genitalium (strain ATCC 33530 / DSM 19775 / NCTC 10195 / G37) (Mycoplasmoides genitalium).